We begin with the raw amino-acid sequence, 233 residues long: MKKAVVLLSGGLDSTTCMSVAHKAGYELYPLSFDYGQRHQRELEAAKAVAQYYKVKEHRLIKIEHVGGSALTDASIQVPDYTEDGQIPVTYVPARNILFLSYALGYGEVIGAEAIFIGISSVDYSGYPDCRPEFLQAFQKVVDVGTKAGVSGQTIAIKAPLLYLSKGETIQLAAENGAPLHHTTSCYRGGEKACGTCDSCTLRLKGFAEAGIKDPIDYVNQGDRSCFSTPLED.

8 to 18 (LSGGLDSTTCM) serves as a coordination point for ATP. Zn(2+) contacts are provided by Cys-186, Cys-194, Cys-197, and Cys-200.

The protein belongs to the QueC family. As to quaternary structure, homodimer. Zn(2+) serves as cofactor.

It catalyses the reaction 7-carboxy-7-deazaguanine + NH4(+) + ATP = 7-cyano-7-deazaguanine + ADP + phosphate + H2O + H(+). It functions in the pathway purine metabolism; 7-cyano-7-deazaguanine biosynthesis. Functionally, catalyzes the ATP-dependent conversion of 7-carboxy-7-deazaguanine (CDG) to 7-cyano-7-deazaguanine (preQ(0)). This chain is 7-cyano-7-deazaguanine synthase, found in Desulfitobacterium hafniense (strain DSM 10664 / DCB-2).